Here is a 298-residue protein sequence, read N- to C-terminus: Tyrosine recombinase XerC (298 aa).

Positions Met1–Asn85 constitute a Core-binding (CB) domain. One can recognise a Tyr recombinase domain in the interval Arg106–Asp285. Catalysis depends on residues Arg146, Lys170, His237, Arg240, and His263. Tyr272 functions as the O-(3'-phospho-DNA)-tyrosine intermediate in the catalytic mechanism.

Belongs to the 'phage' integrase family. XerC subfamily. Forms a cyclic heterotetrameric complex composed of two molecules of XerC and two molecules of XerD.

The protein resides in the cytoplasm. Site-specific tyrosine recombinase, which acts by catalyzing the cutting and rejoining of the recombining DNA molecules. The XerC-XerD complex is essential to convert dimers of the bacterial chromosome into monomers to permit their segregation at cell division. It also contributes to the segregational stability of plasmids. In Pseudomonas fluorescens (strain ATCC BAA-477 / NRRL B-23932 / Pf-5), this protein is Tyrosine recombinase XerC.